Here is a 383-residue protein sequence, read N- to C-terminus: Putative glutamate--cysteine ligase 2-2 (383 aa).

The interval 35 to 56 (RGDRDGAGGPPGGADPDGDLDG) is disordered.

This sequence belongs to the glutamate--cysteine ligase type 2 family. YbdK subfamily.

The catalysed reaction is L-cysteine + L-glutamate + ATP = gamma-L-glutamyl-L-cysteine + ADP + phosphate + H(+). Functionally, ATP-dependent carboxylate-amine ligase which exhibits weak glutamate--cysteine ligase activity. In Frankia alni (strain DSM 45986 / CECT 9034 / ACN14a), this protein is Putative glutamate--cysteine ligase 2-2.